The primary structure comprises 303 residues: MDQYDTTKMIQEIDEFSSKVIAFNSNVYTKITPEAEKSFKKKSVIDIDCLTTEKQIELMKLSIKHKHPKYSFIELSNKFSVDLSCDDNMFLKLAVNYNDEEVLKYLIDSGIDVTVENNFAVKLQSGIIHNNRIIDLLINNGADITVDNYFPYRYAASEQNKEALKILFSYNPNVDSTMLLASINPSEIGAPILDFLISLNADVNINNGAILRENNQYYPVVKSLLAAGADVSYLSTKHLVKIIRSHNKRIIDIYIKFGVDFSKINDIAIEEKDQEYVDTLINWGIEPRVLACLFSSKLSKYRK.

ANK repeat units follow at residues 86–115 (DDNM…DVTV), 117–146 (NNFA…DITV), 147–176 (DNYF…NVDS), and 200–233 (NADV…DVSY).

The polypeptide is Putative ankyrin repeat protein R601 (Acanthamoeba polyphaga (Amoeba)).